A 242-amino-acid polypeptide reads, in one-letter code: Small ribosomal subunit protein uS3 (242 aa).

The 72-residue stretch at 39 to 110 folds into the KH type-2 domain; sequence IRKFIHKKYG…QVRINVVEVE (72 aa). Positions 216–242 are disordered; that stretch reads QPMPVGAAPRRRASRRPQQFEDRSNEG. A compositionally biased stretch (basic and acidic residues) spans 233–242; the sequence is QQFEDRSNEG.

This sequence belongs to the universal ribosomal protein uS3 family. Part of the 30S ribosomal subunit. Forms a tight complex with proteins S10 and S14.

In terms of biological role, binds the lower part of the 30S subunit head. Binds mRNA in the 70S ribosome, positioning it for translation. The sequence is that of Small ribosomal subunit protein uS3 from Synechococcus sp. (strain CC9605).